Reading from the N-terminus, the 459-residue chain is Antizyme inhibitor 2 (459 aa).

The necessary for polyamine uptake stimulation stretch occupies residues 117–140 (QVAQIKYAAKHGVRLLSFDNEVEL).

The protein belongs to the Orn/Lys/Arg decarboxylase class-II family. ODC antizyme inhibitor subfamily. Monomer. Interacts with OAZ1, OAZ2 and OAZ3; this interaction disrupts the interaction between the antizyme and ODC1. Does not form a heterodimer with ODC1. Post-translationally, ubiquitinated, leading to its proteasomal degradation; a process that is reduced in presence of antizymes. May also be degraded through the lysosomal degradative pathway in a proteasomal-independent manner. As to expression, expressed in the medulla and chromaffin cells of the adrenal gland. Expressed in the Langerhans islets of the pancreas. Expressed in the inner part of the seminiferous tubules and in spermatozoa located in the lumen of the epididymis of the testis. Expressed in the cortex, hippocampus and cerebellum of the brain. Expressed in normal and neoplastic mast cells (MC) (at protein level). Expressed in testis, pancreas and brain. Expressed throughout the differentiation process from spermatids to spermatozoa in the inner part of the seminiferous tubules. Expressed in the kidney: expressed in the superficial (Cs) and the deep layer (Cd) of the cortex region and in the outer stripe (OS), inner stripe (IS) and the inner medulla papilla (IM) of the medulla region.

Its subcellular location is the nucleus. It localises to the cytoplasm. It is found in the perinuclear region. The protein resides in the membrane. The protein localises to the cytoplasmic vesicle. Its subcellular location is the endoplasmic reticulum-Golgi intermediate compartment. It localises to the golgi apparatus. It is found in the cis-Golgi network. The protein resides in the trans-Golgi network. The protein localises to the cytoplasmic granule. Its subcellular location is the cell projection. It localises to the axon. It is found in the dendrite. The protein resides in the perikaryon. Its function is as follows. Antizyme inhibitor (AZI) protein that positively regulates ornithine decarboxylase (ODC) activity and polyamine uptake. AZI is an enzymatically inactive ODC homolog that counteracts the negative effect of ODC antizymes (AZs) OAZ1, OAZ2 and OAZ3 on ODC activity by competing with ODC for antizyme-binding. Inhibits antizyme-dependent ODC degradation and releases ODC monomers from their inactive complex with antizymes, leading to formation of the catalytically active ODC homodimer and restoring polyamine production. Participates in the morphological integrity of the trans-Golgi network (TGN) and functions as a regulator of intracellular secretory vesicle trafficking. This chain is Antizyme inhibitor 2 (Azin2), found in Mus musculus (Mouse).